Here is a 271-residue protein sequence, read N- to C-terminus: Pyridoxine kinase (271 aa).

Residue N141 participates in ATP binding. E144 serves as a coordination point for Mg(2+). ATP-binding positions include 178–182 (TGGGK), D190, I206, G215, and K240.

Belongs to the ThiD family. As to quaternary structure, homodimer.

The enzyme catalyses pyridoxal + ATP = pyridoxal 5'-phosphate + ADP + H(+). Its function is as follows. Phosphorylates B6 vitamers; functions in a salvage pathway. Uses pyridoxal, pyridoxine, and pyridoxamine as substrates. Can also use hydroxymethylpyrimidine (HMP) as substrate. The chain is Pyridoxine kinase (pdxK) from Bacillus subtilis (strain 168).